Consider the following 699-residue polypeptide: Homeobox-leucine zipper protein HDG8 (699 aa).

The tract at residues 1-31 (MDNNGGGSSGNEQYTSGDAKQNGKRTCHRHT) is disordered. Polar residues predominate over residues 10–19 (GNEQYTSGDA). Basic residues predominate over residues 22 to 31 (NGKRTCHRHT). The segment at residues 23-82 (GKRTCHRHTPQQIQRLEAYFKECPHPDERQRNQLCRELKLEPDQIKFWFQNKRTQSKTQE) is a DNA-binding region (homeobox). Residues 89-149 (LLRGENETLQ…LKDHRDRISN (61 aa)) are a coiled coil. The region spanning 204 to 438 (AETDMSLLSE…LERMCERMAL (235 aa)) is the START domain.

This sequence belongs to the HD-ZIP homeobox family. Class IV subfamily. Interacts with ANT. Expressed in the embryo at early stage and in the endosperm.

The protein localises to the nucleus. Functionally, probable transcription factor. This Arabidopsis thaliana (Mouse-ear cress) protein is Homeobox-leucine zipper protein HDG8.